The following is a 140-amino-acid chain: Histone H2B.1, sperm (140 aa).

The disordered stretch occupies residues 1-47 (MPSQRSPTKRSPTKRSPQKGAGKGGKGSKRGGKARRRGGAAVRRRRR). Short sequence motifs (SPKK motif) lie at residues 6 to 9 (SPTK), 11 to 14 (SPTK), and 16 to 19 (SPQK). Basic residues-rich tracts occupy residues 7-17 (PTKRSPTKRSP) and 26-47 (KGSK…RRRR). S11 and S16 each carry phosphoserine. Residue S127 is glycosylated (O-linked (GlcNAc) serine). A Glycyl lysine isopeptide (Lys-Gly) (interchain with G-Cter in ubiquitin) cross-link involves residue K135.

Belongs to the histone H2B family. In terms of assembly, the nucleosome is a histone octamer containing two molecules each of H2A, H2B, H3 and H4 assembled in one H3-H4 heterotetramer and two H2A-H2B heterodimers. The octamer wraps approximately 147 bp of DNA. Post-translationally, monoubiquitination of Lys-135 gives a specific tag for epigenetic transcriptional activation and is also prerequisite for histone H3 'Lys-4' and 'Lys-79' methylation. In terms of processing, phosphorylated on SPKK motifs 2 and 3; which may regulate DNA binding. Dephosphorylated during maturation of spermatids to mature sperm and rephosphorylated at fertilization. GlcNAcylation at Ser-127 promotes monoubiquitination of Lys-135. It fluctuates in response to extracellular glucose, and associates with transcribed genes.

The protein localises to the nucleus. It localises to the chromosome. Core component of nucleosome. Nucleosomes wrap and compact DNA into chromatin, limiting DNA accessibility to the cellular machineries which require DNA as a template. Histones thereby play a central role in transcription regulation, DNA repair, DNA replication and chromosomal stability. DNA accessibility is regulated via a complex set of post-translational modifications of histones, also called histone code, and nucleosome remodeling. In Strongylocentrotus purpuratus (Purple sea urchin), this protein is Histone H2B.1, sperm.